Consider the following 395-residue polypeptide: MQRMVILGATGSIGSSTLSVIESNPDAYSVYALVANTSVEKMLALCETHRPQIAHMVDGQAAKSLKQRLPTSLNVEITTGEDQLIDIVSASCVDSVMAAIVGAAGLVPTLAAVKAGKRVLLANKESLVMSGRLFIDEMRRSGARVLPVDSEHNAIYQALPESLQSNIGYCELEKAGVSHILLTGSGGPFLTSELASLASMTPAQACKHPNWSMGRKISVDSATMMNKGLEYIEARWLFNAADDQLKVVIHPQSVIHSMVQYLDGSVLAQLGNPDMRTPIAHCMAYPQRIQSGVEPLDFFKVGQLSFSEPDFNRFPCLALAMEACKQGQEATTVVNAANEISVQAFLENKIKFTDIAKVNEACLSQVAPQSLNSIEDIIRLDLQSRTYAAEWVKKI.

The NADPH site is built by Thr-10, Gly-11, Ser-12, Ile-13, and Asn-123. Lys-124 lines the 1-deoxy-D-xylulose 5-phosphate pocket. NADPH is bound at residue Glu-125. Mn(2+) is bound at residue Asp-149. 1-deoxy-D-xylulose 5-phosphate is bound by residues Ser-150, Glu-151, Ser-185, and His-208. Glu-151 provides a ligand contact to Mn(2+). Position 214 (Gly-214) interacts with NADPH. Positions 221, 226, 227, and 230 each coordinate 1-deoxy-D-xylulose 5-phosphate. Glu-230 contributes to the Mn(2+) binding site.

The protein belongs to the DXR family. Mg(2+) is required as a cofactor. Mn(2+) serves as cofactor.

It carries out the reaction 2-C-methyl-D-erythritol 4-phosphate + NADP(+) = 1-deoxy-D-xylulose 5-phosphate + NADPH + H(+). It participates in isoprenoid biosynthesis; isopentenyl diphosphate biosynthesis via DXP pathway; isopentenyl diphosphate from 1-deoxy-D-xylulose 5-phosphate: step 1/6. Functionally, catalyzes the NADPH-dependent rearrangement and reduction of 1-deoxy-D-xylulose-5-phosphate (DXP) to 2-C-methyl-D-erythritol 4-phosphate (MEP). This is 1-deoxy-D-xylulose 5-phosphate reductoisomerase from Shewanella sediminis (strain HAW-EB3).